The chain runs to 126 residues: Small ribosomal subunit protein uS12 (126 aa).

A 3-methylthioaspartic acid modification is found at Asp89. Residues 106–126 (GVRERRRSRSKYGAKMPRSAA) form a disordered region.

The protein belongs to the universal ribosomal protein uS12 family. Part of the 30S ribosomal subunit. Contacts proteins S8 and S17. May interact with IF1 in the 30S initiation complex.

Its function is as follows. With S4 and S5 plays an important role in translational accuracy. Functionally, interacts with and stabilizes bases of the 16S rRNA that are involved in tRNA selection in the A site and with the mRNA backbone. Located at the interface of the 30S and 50S subunits, it traverses the body of the 30S subunit contacting proteins on the other side and probably holding the rRNA structure together. The combined cluster of proteins S8, S12 and S17 appears to hold together the shoulder and platform of the 30S subunit. In Tremblaya princeps, this protein is Small ribosomal subunit protein uS12.